We begin with the raw amino-acid sequence, 99 residues long: Bacterial microcompartment shell vertex protein EutN (99 aa).

The BMV domain occupies 5-87 (MKLAVVTGQI…VDLCVIGIVD (83 aa)).

Belongs to the CcmL/EutN family. In terms of assembly, homopentamer with a small central pore.

It localises to the bacterial microcompartment. The protein operates within amine and polyamine degradation; ethanolamine degradation. In terms of biological role, probably forms vertices in the bacterial microcompartment (BMC) shell dedicated to ethanolamine degradation. Expression of eutK, eutL, eutM, eutN, eutS (eutSMNLK) in E.coli leads to formation of a single BMC. Coexpression of eutQ with eutSMNLK permits E.coli to make cells with more than one mobile BMC, as is usual in vivo. It may be involved in transporting positively charged molecules into and out of the BMC. Functionally, the ethanolamine (EA) catabolic bacterial microcompartment (BMC) probably concentrates low levels of ethanolamine catabolic enzymes, concentrates volatile reaction intermediates, keeps the level of toxic acetaldehyde low, generates enough acetyl-CoA to support cell growth, and maintains a pool of free coenzyme A (CoA) and NAD. Expression of the eut operon allows this bacteria to use ethanolamine (EA) as a carbon, nitrogen and energy source. It relies on cobalamin (vitamin B12) both as a cofactor for the ethanolamine ammonia-lyase (EAL) activity and to induce the operon. EA enhances bacterial survival in macrophages in a concentration-dependent manner, suggesting it is an important nutrient during infection. The protein is Bacterial microcompartment shell vertex protein EutN of Salmonella typhimurium (strain LT2 / SGSC1412 / ATCC 700720).